Reading from the N-terminus, the 425-residue chain is Tryptophan synthase beta chain (425 aa).

At Lys-107 the chain carries N6-(pyridoxal phosphate)lysine.

It belongs to the TrpB family. In terms of assembly, tetramer of two alpha and two beta chains. Requires pyridoxal 5'-phosphate as cofactor.

The enzyme catalyses (1S,2R)-1-C-(indol-3-yl)glycerol 3-phosphate + L-serine = D-glyceraldehyde 3-phosphate + L-tryptophan + H2O. It functions in the pathway amino-acid biosynthesis; L-tryptophan biosynthesis; L-tryptophan from chorismate: step 5/5. Functionally, the beta subunit is responsible for the synthesis of L-tryptophan from indole and L-serine. This chain is Tryptophan synthase beta chain, found in Synechococcus sp. (strain JA-2-3B'a(2-13)) (Cyanobacteria bacterium Yellowstone B-Prime).